The chain runs to 510 residues: Histidine ammonia-lyase (510 aa).

Residues alanine 143–glycine 145 constitute a cross-link (5-imidazolinone (Ala-Gly)). Position 144 is a 2,3-didehydroalanine (Ser) (serine 144).

The protein belongs to the PAL/histidase family. Contains an active site 4-methylidene-imidazol-5-one (MIO), which is formed autocatalytically by cyclization and dehydration of residues Ala-Ser-Gly.

The protein localises to the cytoplasm. It carries out the reaction L-histidine = trans-urocanate + NH4(+). Its pathway is amino-acid degradation; L-histidine degradation into L-glutamate; N-formimidoyl-L-glutamate from L-histidine: step 1/3. This chain is Histidine ammonia-lyase, found in Pseudomonas putida (strain ATCC 47054 / DSM 6125 / CFBP 8728 / NCIMB 11950 / KT2440).